The primary structure comprises 682 residues: Methionine--tRNA ligase (682 aa).

A 'HIGH' region motif is present at residues 15-25 (PYANGAIHLGH). Zn(2+) is bound by residues Cys-146, Cys-149, Cys-159, and Cys-162. The 'KMSKS' region signature appears at 331-335 (KMSKS). An ATP-binding site is contributed by Lys-334. One can recognise a tRNA-binding domain in the interval 580-682 (DFAKLDLRVA…QGVKPGMQVK (103 aa)).

This sequence belongs to the class-I aminoacyl-tRNA synthetase family. MetG type 1 subfamily. In terms of assembly, homodimer. Requires Zn(2+) as cofactor.

The protein localises to the cytoplasm. It catalyses the reaction tRNA(Met) + L-methionine + ATP = L-methionyl-tRNA(Met) + AMP + diphosphate. Functionally, is required not only for elongation of protein synthesis but also for the initiation of all mRNA translation through initiator tRNA(fMet) aminoacylation. The sequence is that of Methionine--tRNA ligase from Pasteurella multocida (strain Pm70).